The following is a 131-amino-acid chain: Olfactory receptor-like protein COR9 (131 aa).

Residues 1–16 lie on the Cytoplasmic side of the membrane; the sequence is VAICSPLLYSTVMTKR. The helical transmembrane segment at 17-41 threads the bilayer; sequence VCMQLVVGSYMGGLLNSLTHTCGLL. At 42–82 the chain is on the extracellular side; it reads GLPFCGPNVINHYFCDIPPLLQLACSDTHRNETLLLAFSAV. Residue asparagine 72 is glycosylated (N-linked (GlcNAc...) asparagine). Residues 83–103 traverse the membrane as a helical segment; sequence IALFTLFVITASYMLILSVIL. At 104-116 the chain is on the cytoplasmic side; sequence KIQSDDGRKKTFH. Residues 117 to 131 traverse the membrane as a helical segment; the sequence is TCASHLTAITIFFGS.

Belongs to the G-protein coupled receptor 1 family.

It localises to the cell membrane. In terms of biological role, odorant receptor. In Gallus gallus (Chicken), this protein is Olfactory receptor-like protein COR9 (COR9).